The chain runs to 141 residues: Putative antirestriction protein YubI (141 aa).

This sequence belongs to the antirestriction protein family.

The sequence is that of Putative antirestriction protein YubI (yubI) from Escherichia coli (strain K12).